A 3133-amino-acid chain; its full sequence is Cysteine repeat modular protein A (3133 aa).

A disordered region spans residues 1–39 (MDSASTSMSRVHPSGVYRRPLLPSGGPRSTSERDERVDL). The span at 30-39 (TSERDERVDL) shows a compositional bias: basic and acidic residues. Residues 123-143 (LFLLFSSSPLLLLLLLHQFFI) traverse the membrane as a helical segment. Composition is skewed to basic and acidic residues over residues 173–211 (TFEE…DGKE) and 301–311 (NESEKAERARL). Disordered stretches follow at residues 173-234 (TFEE…EGRR) and 294-317 (VSPS…STPA). 3 N-linked (GlcNAc...) asparagine glycosylation sites follow: asparagine 301, asparagine 392, and asparagine 470. In terms of domain architecture, Kringle spans 577-644 (DETLEQGKLY…DPHVRFDFCD (68 aa)). 2 disulfide bridges follow: cysteine 599/cysteine 631 and cysteine 620/cysteine 643. N-linked (GlcNAc...) asparagine glycans are attached at residues asparagine 1364 and asparagine 1532. Transmembrane regions (helical) follow at residues 2229 to 2249 (MVWN…FNIV), 2276 to 2296 (LTGI…PSWI), and 2339 to 2359 (VFYA…MSII). A glycan (N-linked (GlcNAc...) asparagine) is linked at asparagine 2369. The next 3 membrane-spanning stretches (helical) occupy residues 2420–2440 (AAKF…FVYS), 2489–2509 (VGIT…FLVL), and 2539–2559 (WEMV…VALI). Asparagine 2565 carries an N-linked (GlcNAc...) asparagine glycan. The helical transmembrane segment at 2569 to 2589 (VWLAVVIAVIFLIIHLVTQPF) threads the bilayer. The N-linked (GlcNAc...) asparagine glycan is linked to asparagine 2602. Transmembrane regions (helical) follow at residues 2607–2627 (IWTI…SGSV) and 2632–2652 (LLFV…SLMF). 2 stretches are compositionally biased toward basic and acidic residues: residues 2827 to 2838 (FAAKDETPTAEE) and 3049 to 3069 (QEEN…DREI). Disordered stretches follow at residues 2827–2847 (FAAK…DERL) and 3049–3101 (QEEN…LPEG). The stretch at 2955–3068 (SEALQKRNRK…KEEREEADRE (114 aa)) forms a coiled coil. Acidic residues predominate over residues 3083–3094 (GEDDTATIDDSS).

In terms of assembly, component of a complex, at least composed of cysteine repeat modular protein A (CRMPa), cysteine repeat modular protein B (CRMPb), micronemal protein 15 (MIC15) and thrombospondin type 1 domain-containing protein (TSP1).

Its subcellular location is the cell membrane. The protein resides in the endoplasmic reticulum. It localises to the golgi apparatus. Its function is as follows. Required for triggering rhoptry secretion. Plays a role in host cell invasion. This is Cysteine repeat modular protein A from Toxoplasma gondii.